The following is a 142-amino-acid chain: Dromaiocalcin-1 (142 aa).

3 cysteine pairs are disulfide-bonded: C13/C24, C41/C138, and C113/C130. Residues 20–139 (FRGNCYGYFR…CGERNAFICK (120 aa)) form the C-type lectin domain.

The protein localises to the secreted. It localises to the extracellular space. It is found in the extracellular matrix. This is Dromaiocalcin-1 from Dromaius novaehollandiae (Emu).